The sequence spans 182 residues: Adenine phosphoribosyltransferase (182 aa).

This sequence belongs to the purine/pyrimidine phosphoribosyltransferase family. Homodimer.

It localises to the cytoplasm. The catalysed reaction is AMP + diphosphate = 5-phospho-alpha-D-ribose 1-diphosphate + adenine. It participates in purine metabolism; AMP biosynthesis via salvage pathway; AMP from adenine: step 1/1. In terms of biological role, catalyzes a salvage reaction resulting in the formation of AMP, that is energically less costly than de novo synthesis. This chain is Adenine phosphoribosyltransferase, found in Pseudomonas paraeruginosa (strain DSM 24068 / PA7) (Pseudomonas aeruginosa (strain PA7)).